A 902-amino-acid polypeptide reads, in one-letter code: Nitrate reductase [NADPH] (902 aa).

Cys-182 provides a ligand contact to Mo-molybdopterin. In terms of domain architecture, Cytochrome b5 heme-binding spans 537 to 612 (LPLIFADEVA…LKKYCIGRCS (76 aa)). His-572 and His-595 together coordinate heme. In terms of domain architecture, FAD-binding FR-type spans 637 to 751 (RTKVPIVLIS…KGPLGHFTYY (115 aa)). Residues 689-692 (RAYT), 708-712 (LIKVY), Phe-713, 725-727 (LFS), and Thr-778 each bind FAD. 872 to 879 (CMCGPEGM) provides a ligand contact to NADP(+).

The protein belongs to the nitrate reductase family. Homodimer. It depends on FAD as a cofactor. Requires heme as cofactor. Mo-molybdopterin is required as a cofactor.

The enzyme catalyses nitrite + NADP(+) + H2O = nitrate + NADPH + H(+). Its function is as follows. Nitrate reductase is a key enzyme involved in the first step of nitrate assimilation in plants, fungi and bacteria. In Phytophthora infestans (Potato late blight agent), this protein is Nitrate reductase [NADPH] (NIAA).